A 346-amino-acid chain; its full sequence is Phosphoribosylformylglycinamidine cyclo-ligase (346 aa).

Belongs to the AIR synthase family.

The protein localises to the cytoplasm. The enzyme catalyses 2-formamido-N(1)-(5-O-phospho-beta-D-ribosyl)acetamidine + ATP = 5-amino-1-(5-phospho-beta-D-ribosyl)imidazole + ADP + phosphate + H(+). The protein operates within purine metabolism; IMP biosynthesis via de novo pathway; 5-amino-1-(5-phospho-D-ribosyl)imidazole from N(2)-formyl-N(1)-(5-phospho-D-ribosyl)glycinamide: step 2/2. The polypeptide is Phosphoribosylformylglycinamidine cyclo-ligase (Shewanella pealeana (strain ATCC 700345 / ANG-SQ1)).